The sequence spans 228 residues: Cytochrome c oxidase subunit 2 (228 aa).

Residues 1-14 (MAYPLQLGLQDASS) are Mitochondrial intermembrane-facing. A helical membrane pass occupies residues 15–45 (PIMEELTNFHDHTLMIVFLISSLVLYLISLM). The Mitochondrial matrix segment spans residues 46-59 (LTTKLIHTSTMDAQ). Residues 60–87 (EVETIWTILPAIILILIALPSLRILYMM) traverse the membrane as a helical segment. Over 88-228 (DEINNPVLTV…FENWSVSMTQ (141 aa)) the chain is Mitochondrial intermembrane. Residues H161, C196, E198, C200, H204, and M207 each coordinate Cu cation. E198 is a Mg(2+) binding site.

This sequence belongs to the cytochrome c oxidase subunit 2 family. Component of the cytochrome c oxidase (complex IV, CIV), a multisubunit enzyme composed of 14 subunits. The complex is composed of a catalytic core of 3 subunits MT-CO1, MT-CO2 and MT-CO3, encoded in the mitochondrial DNA, and 11 supernumerary subunits COX4I, COX5A, COX5B, COX6A, COX6B, COX6C, COX7A, COX7B, COX7C, COX8 and NDUFA4, which are encoded in the nuclear genome. The complex exists as a monomer or a dimer and forms supercomplexes (SCs) in the inner mitochondrial membrane with NADH-ubiquinone oxidoreductase (complex I, CI) and ubiquinol-cytochrome c oxidoreductase (cytochrome b-c1 complex, complex III, CIII), resulting in different assemblies (supercomplex SCI(1)III(2)IV(1) and megacomplex MCI(2)III(2)IV(2)). Found in a complex with TMEM177, COA6, COX18, COX20, SCO1 and SCO2. Interacts with TMEM177 in a COX20-dependent manner. Interacts with COX20. Interacts with COX16. It depends on Cu cation as a cofactor.

The protein localises to the mitochondrion inner membrane. The catalysed reaction is 4 Fe(II)-[cytochrome c] + O2 + 8 H(+)(in) = 4 Fe(III)-[cytochrome c] + 2 H2O + 4 H(+)(out). Functionally, component of the cytochrome c oxidase, the last enzyme in the mitochondrial electron transport chain which drives oxidative phosphorylation. The respiratory chain contains 3 multisubunit complexes succinate dehydrogenase (complex II, CII), ubiquinol-cytochrome c oxidoreductase (cytochrome b-c1 complex, complex III, CIII) and cytochrome c oxidase (complex IV, CIV), that cooperate to transfer electrons derived from NADH and succinate to molecular oxygen, creating an electrochemical gradient over the inner membrane that drives transmembrane transport and the ATP synthase. Cytochrome c oxidase is the component of the respiratory chain that catalyzes the reduction of oxygen to water. Electrons originating from reduced cytochrome c in the intermembrane space (IMS) are transferred via the dinuclear copper A center (CU(A)) of subunit 2 and heme A of subunit 1 to the active site in subunit 1, a binuclear center (BNC) formed by heme A3 and copper B (CU(B)). The BNC reduces molecular oxygen to 2 water molecules using 4 electrons from cytochrome c in the IMS and 4 protons from the mitochondrial matrix. The polypeptide is Cytochrome c oxidase subunit 2 (MT-CO2) (Meriones shawi (Shaw's jird)).